The sequence spans 324 residues: Cytochrome c biogenesis protein CcsA (324 aa).

Transmembrane regions (helical) follow at residues 17–37, 44–64, 68–88, 99–119, 145–165, 230–250, 264–278, and 291–311; these read IISV…IPAL, GMIA…IYSG, LSNL…IHMI, YLSA…TSGL, MLLS…LLVI, VISI…VWAN, TWAF…IYSH, and AIVA…VNLL.

Belongs to the CcmF/CycK/Ccl1/NrfE/CcsA family. In terms of assembly, may interact with Ccs1.

It is found in the plastid. The protein resides in the chloroplast thylakoid membrane. Required during biogenesis of c-type cytochromes (cytochrome c6 and cytochrome f) at the step of heme attachment. The chain is Cytochrome c biogenesis protein CcsA from Lemna minor (Common duckweed).